The sequence spans 638 residues: DNA gyrase subunit B (638 aa).

One can recognise a Toprim domain in the interval 423-537 (CEVYIVEGDS…KGHVYLAMPP (115 aa)). Mg(2+)-binding residues include Glu-429, Asp-502, and Asp-504.

This sequence belongs to the type II topoisomerase GyrB family. As to quaternary structure, heterotetramer, composed of two GyrA and two GyrB chains. In the heterotetramer, GyrA contains the active site tyrosine that forms a transient covalent intermediate with DNA, while GyrB binds cofactors and catalyzes ATP hydrolysis. It depends on Mg(2+) as a cofactor. The cofactor is Mn(2+). Ca(2+) is required as a cofactor.

Its subcellular location is the cytoplasm. The catalysed reaction is ATP-dependent breakage, passage and rejoining of double-stranded DNA.. Its function is as follows. A type II topoisomerase that negatively supercoils closed circular double-stranded (ds) DNA in an ATP-dependent manner to modulate DNA topology and maintain chromosomes in an underwound state. Negative supercoiling favors strand separation, and DNA replication, transcription, recombination and repair, all of which involve strand separation. Also able to catalyze the interconversion of other topological isomers of dsDNA rings, including catenanes and knotted rings. Type II topoisomerases break and join 2 DNA strands simultaneously in an ATP-dependent manner. The sequence is that of DNA gyrase subunit B from Treponema denticola (strain ATCC 35405 / DSM 14222 / CIP 103919 / JCM 8153 / KCTC 15104).